Here is a 354-residue protein sequence, read N- to C-terminus: Guanine nucleotide-binding protein G(i) subunit alpha (354 aa).

Gly-2 carries the N-myristoyl glycine lipid modification. Residue Cys-3 is the site of S-palmitoyl cysteine attachment. Residues 32–354 form the G-alpha domain; that stretch reads REVKLLLLGA…KNNLKDCGLF (323 aa). A G1 motif region spans residues 35 to 48; it reads KLLLLGAGESGKST. Residues 40-47, 175-181, 200-204, 269-272, and Ala-326 contribute to the GTP site; these read GAGESGKS, LRTRVKT, DVGGQ, and NKKD. 2 residues coordinate Mg(2+): Ser-47 and Thr-181. The segment at 173 to 181 is G2 motif; sequence DVLRTRVKT. Residues 196–205 form a G3 motif region; the sequence is FKMFDVGGQR. The segment at 265–272 is G4 motif; that stretch reads ILFLNKKD. The segment at 324 to 329 is G5 motif; sequence TCATDT.

This sequence belongs to the G-alpha family. G(i/o/t/z) subfamily. G proteins are composed of 3 units; alpha, beta and gamma. The alpha chain contains the guanine nucleotide binding site.

Guanine nucleotide-binding proteins (G proteins) are involved as modulators or transducers in various transmembrane signaling systems. This G protein is involved in 1-methyladenine-induced oocyte maturation. The protein is Guanine nucleotide-binding protein G(i) subunit alpha of Patiria pectinifera (Starfish).